Reading from the N-terminus, the 652-residue chain is DNA ligase (652 aa).

NAD(+) is bound by residues 29-33 (DSEYD), 78-79 (SL), and Glu107. Lys109 functions as the N6-AMP-lysine intermediate in the catalytic mechanism. Positions 130, 164, 278, and 302 each coordinate NAD(+). Zn(2+) is bound by residues Cys395, Cys398, Cys413, and Cys418. Positions 577 to 652 (VADAALSGLT…VRDEAWLESL (76 aa)) constitute a BRCT domain.

Belongs to the NAD-dependent DNA ligase family. LigA subfamily. Mg(2+) is required as a cofactor. Requires Mn(2+) as cofactor.

It carries out the reaction NAD(+) + (deoxyribonucleotide)n-3'-hydroxyl + 5'-phospho-(deoxyribonucleotide)m = (deoxyribonucleotide)n+m + AMP + beta-nicotinamide D-nucleotide.. In terms of biological role, DNA ligase that catalyzes the formation of phosphodiester linkages between 5'-phosphoryl and 3'-hydroxyl groups in double-stranded DNA using NAD as a coenzyme and as the energy source for the reaction. It is essential for DNA replication and repair of damaged DNA. The chain is DNA ligase from Streptococcus pneumoniae (strain Taiwan19F-14).